The primary structure comprises 198 residues: 3-isopropylmalate dehydratase small subunit (198 aa).

It belongs to the LeuD family. LeuD type 1 subfamily. Heterodimer of LeuC and LeuD.

The enzyme catalyses (2R,3S)-3-isopropylmalate = (2S)-2-isopropylmalate. It functions in the pathway amino-acid biosynthesis; L-leucine biosynthesis; L-leucine from 3-methyl-2-oxobutanoate: step 2/4. Catalyzes the isomerization between 2-isopropylmalate and 3-isopropylmalate, via the formation of 2-isopropylmaleate. This is 3-isopropylmalate dehydratase small subunit from Mycolicibacterium paratuberculosis (strain ATCC BAA-968 / K-10) (Mycobacterium paratuberculosis).